Reading from the N-terminus, the 105-residue chain is MNRLKKGDDVIVIAGKDKGRRGVVKSFAKGGSLVLVEGINIVKKHIKPNPNRGIEGGVVEKELPVDASNVAIFNPATEKADRVGYKFVDEKKVRYFKSNGELVDL.

This sequence belongs to the universal ribosomal protein uL24 family. As to quaternary structure, part of the 50S ribosomal subunit.

In terms of biological role, one of two assembly initiator proteins, it binds directly to the 5'-end of the 23S rRNA, where it nucleates assembly of the 50S subunit. Its function is as follows. One of the proteins that surrounds the polypeptide exit tunnel on the outside of the subunit. The polypeptide is Large ribosomal subunit protein uL24 (Francisella tularensis subsp. novicida (strain U112)).